Reading from the N-terminus, the 224-residue chain is Protein DCL, chloroplastic (224 aa).

The transit peptide at 1 to 50 directs the protein to the chloroplast; that stretch reads MASICTSNFHFLCRKNNSSPISHHLLLSPSSLSFSRCGGLRLCRCAAVKT. The interval 76 to 98 is disordered; it reads TTSESEELVKEESDDEVGKKSGD. The segment covering 82-98 has biased composition (basic and acidic residues); sequence ELVKEESDDEVGKKSGD.

It localises to the plastid. Its subcellular location is the chloroplast. In terms of biological role, has a function in the early stage of chloroplast development and palisade cell morphogenesis. Required for correct plastid ribosome assembly. Required for processing and maturation of 4.5S rRNA. In Solanum lycopersicum (Tomato), this protein is Protein DCL, chloroplastic (DCL).